A 2798-amino-acid polypeptide reads, in one-letter code: Kinesin-like protein KIN-12F (2798 aa).

The disordered stretch occupies residues 1-165 (MVRDLAAVRR…RPPMSSGQRG (165 aa)). 2 stretches are compositionally biased toward low complexity: residues 8-22 (VRRT…SSAS) and 31-58 (PVDA…QPPQ). In terms of domain architecture, Kinesin motor spans 210–547 (NVQVVIRVRP…LKFAQRARLI (338 aa)). 291–298 (GQTGSGKT) contributes to the ATP binding site. Positions 600–615 (DVDDGTESMNMDEEND) are enriched in acidic residues. A disordered region spans residues 600–621 (DVDDGTESMNMDEENDNDAHDR). 5 coiled-coil regions span residues 792–835 (ELKR…HSSN), 890–987 (LAEE…HRRQ), 1014–1108 (LKRM…VMKE), 1281–1322 (QRAM…LKNE), and 2130–2333 (ELVD…VRQQ). The tract at residues 2338 to 2359 (PSSGQATSSLEGGMGDFTDSSR) is disordered. Coiled-coil stretches lie at residues 2361–2427 (SREI…VKSD) and 2545–2758 (ESKE…LKLK). The interval 2772–2798 (RSESSSLSSGRSRSPSVCRSPSISSFR) is disordered. Over residues 2774 to 2798 (ESSSLSSGRSRSPSVCRSPSISSFR) the composition is skewed to low complexity.

It belongs to the TRAFAC class myosin-kinesin ATPase superfamily. Kinesin family. KIN-12 subfamily.

In Oryza sativa subsp. japonica (Rice), this protein is Kinesin-like protein KIN-12F.